We begin with the raw amino-acid sequence, 301 residues long: Lipoyl synthase (301 aa).

The [4Fe-4S] cluster site is built by C50, C55, C61, C76, C80, C83, and S289. Residues 62–278 (WNHRTATFLL…RRYALERGFR (217 aa)) enclose the Radical SAM core domain.

This sequence belongs to the radical SAM superfamily. Lipoyl synthase family. [4Fe-4S] cluster serves as cofactor.

The protein localises to the cytoplasm. The catalysed reaction is [[Fe-S] cluster scaffold protein carrying a second [4Fe-4S](2+) cluster] + N(6)-octanoyl-L-lysyl-[protein] + 2 oxidized [2Fe-2S]-[ferredoxin] + 2 S-adenosyl-L-methionine + 4 H(+) = [[Fe-S] cluster scaffold protein] + N(6)-[(R)-dihydrolipoyl]-L-lysyl-[protein] + 4 Fe(3+) + 2 hydrogen sulfide + 2 5'-deoxyadenosine + 2 L-methionine + 2 reduced [2Fe-2S]-[ferredoxin]. It participates in protein modification; protein lipoylation via endogenous pathway; protein N(6)-(lipoyl)lysine from octanoyl-[acyl-carrier-protein]: step 2/2. Functionally, catalyzes the radical-mediated insertion of two sulfur atoms into the C-6 and C-8 positions of the octanoyl moiety bound to the lipoyl domains of lipoate-dependent enzymes, thereby converting the octanoylated domains into lipoylated derivatives. This Roseiflexus sp. (strain RS-1) protein is Lipoyl synthase.